Here is a 758-residue protein sequence, read N- to C-terminus: Vitamin K-dependent gamma-carboxylase (758 aa).

The interval 1–21 (MAVSARSARTSPGSDKVQKDK) is disordered. The residue at position 2 (Ala2) is an N-acetylalanine. The Cytoplasmic portion of the chain corresponds to 2-60 (AVSARSARTSPGSDKVQKDKAELISGPRQDSLMGKLLGFEWTDLSSWRRLVTLLNRPTD). The helical transmembrane segment at 61–81 (PASLAVFRFLFGFLMVLDIPQ) threads the bilayer. Residues 82–113 (ERGLSSLDRKYLDGLDVCRFPLLDALRPLPLD) lie on the Lumenal side of the membrane. Cysteines 99 and 450 form a disulfide. Residues 114–134 (WMYLVYTIMFLGALGMMLGLC) form a helical membrane-spanning segment. Residues 135 to 136 (YR) lie on the Cytoplasmic side of the membrane. Residues 137 to 157 (ISCVLFLLPYWYVFLLDKTSW) traverse the membrane as a helical segment. The Lumenal segment spans residues 158 to 292 (NNHSYLYGLL…VSYFHCMNSQ (135 aa)). The chain crosses the membrane as a helical span at residues 293-313 (LFSIGMFSYVMLASSPLFCSP). Topologically, residues 314 to 361 (EWPRKLVSYCPQRLQELLPLKAAPQPSVSCVYKRSRGKSGQKPGLRHQ) are cytoplasmic. A helical transmembrane segment spans residues 362-382 (LGAAFTLLYLLEQLFLPYSHF). The Lumenal segment spans residues 383 to 758 (LTQGYNNWTN…SNPDPVHSEF (376 aa)). The interval 732-758 (GELSPSNMDSSHSNPPESNPDPVHSEF) is disordered. Residues 735–747 (SPSNMDSSHSNPP) are compositionally biased toward polar residues.

This sequence belongs to the vitamin K-dependent gamma-carboxylase family. Monomer. May interact with CALU.

It is found in the endoplasmic reticulum membrane. The enzyme catalyses 4-carboxy-L-glutamyl-[protein] + 2,3-epoxyphylloquinone + H2O + H(+) = phylloquinol + L-glutamyl-[protein] + CO2 + O2. Its function is as follows. Mediates the vitamin K-dependent carboxylation of glutamate residues to calcium-binding gamma-carboxyglutamate (Gla) residues with the concomitant conversion of the reduced hydroquinone form of vitamin K to vitamin K epoxide. Catalyzes gamma-carboxylation of various proteins, such as blood coagulation factors (F2, F7, F9 and F10), osteocalcin (BGLAP) or matrix Gla protein (MGP). This is Vitamin K-dependent gamma-carboxylase (GGCX) from Pongo abelii (Sumatran orangutan).